A 122-amino-acid chain; its full sequence is Diacylglycerol kinase (122 aa).

Residues Arg10 and Tyr17 each contribute to the ATP site. Residues Arg10, 14–19, and 23–26 contribute to the substrate site; these read AAGYSW and RAAW. Residue Glu29 participates in ATP binding. Glu29 provides a ligand contact to a divalent metal cation. Residues 31–35, 48–51, Arg56, and Glu70 contribute to the substrate site; these read AFRQE and WLDV. The helical transmembrane segment at 35 to 55 threads the bilayer; the sequence is EGVAVLLAVVIACWLDVDAIT. The chain crosses the membrane as a helical span at residues 57–77; sequence VLLISSVMLVMIVEILNSAIE. Residue Glu70 is the Proton acceptor of the active site. ATP-binding positions include Glu77, 86-88, and 95-96; these read EYH and KD. Glu77 is an a divalent metal cation binding site. Residues 98–118 traverse the membrane as a helical segment; it reads GSAAVLIAIIVAVITWCILLW. Substrate is bound by residues Ser99 and 113–118; that span reads WCILLW.

The protein belongs to the bacterial diacylglycerol kinase family. Requires Mg(2+) as cofactor.

Its subcellular location is the cell inner membrane. The enzyme catalyses a 1,2-diacyl-sn-glycerol + ATP = a 1,2-diacyl-sn-glycero-3-phosphate + ADP + H(+). Its function is as follows. Catalyzes the ATP-dependent phosphorylation of sn-l,2-diacylglycerol (DAG) to phosphatidic acid. Involved in the recycling of diacylglycerol produced as a by-product during membrane-derived oligosaccharide (MDO) biosynthesis. In Shigella flexneri, this protein is Diacylglycerol kinase (dgkA).